The primary structure comprises 633 residues: Chaperone protein dnaK2 (633 aa).

At threonine 197 the chain carries Phosphothreonine; by autocatalysis. The tract at residues 600–633 (SNAASQAADGTSSESNNSTEGNDDVIDAEFTESK) is disordered. Positions 608 to 619 (DGTSSESNNSTE) are enriched in low complexity. The segment covering 620 to 633 (GNDDVIDAEFTESK) has biased composition (acidic residues).

This sequence belongs to the heat shock protein 70 family.

In terms of biological role, acts as a chaperone. This Prochlorococcus marinus (strain SARG / CCMP1375 / SS120) protein is Chaperone protein dnaK2 (dnaK2).